The chain runs to 222 residues: Ribonuclease S-3 (222 aa).

An N-terminal signal peptide occupies residues 1 to 22 (MVHVVMMVFLLIVLILCSSTVG). Gln31 is a binding site for RNA. Cysteines 37 and 44 form a disulfide. An N-linked (GlcNAc...) asparagine glycan is attached at Asn40. RNA contacts are provided by residues His55, 92–93 (NV), Phe102, 105–106 (KE), and 109–110 (KH). The active-site Proton donor is His55. The cysteines at positions 70 and 113 are disulfide-linked. Active-site residues include Glu106 and Lys109. His110 serves as the catalytic Proton acceptor. Asn138 carries an N-linked (GlcNAc...) asparagine glycan. Cystine bridges form between Cys177/Cys215 and Cys192/Cys203.

Belongs to the RNase T2 family. Post-translationally, N-linked core structure at Asn-138 contains xylose.

The catalysed reaction is a ribonucleotidyl-ribonucleotide-RNA + H2O = a 3'-end 3'-phospho-ribonucleotide-RNA + a 5'-end dephospho-ribonucleoside-RNA + H(+). Self-incompatibility (SI) is the inherited ability of a flowering plant to prevent self-fertilization by discriminating between self and non-self pollen during pollination. In many species, self-incompatibility is controlled by the single, multiallelic locus S. This Pyrus pyrifolia (Chinese pear) protein is Ribonuclease S-3.